The following is a 98-amino-acid chain: DNA-binding protein Fis (98 aa).

Residues 74–93 (QTKAANMMGINRGTLRKKLK) constitute a DNA-binding region (H-T-H motif).

This sequence belongs to the transcriptional regulatory Fis family. In terms of assembly, homodimer.

In terms of biological role, activates ribosomal RNA transcription. Plays a direct role in upstream activation of rRNA promoters. This Aliivibrio fischeri (strain ATCC 700601 / ES114) (Vibrio fischeri) protein is DNA-binding protein Fis.